The chain runs to 1484 residues: Chromosome partition protein MukB (1484 aa).

Residue 34–41 (GGNGAGKS) coordinates ATP. Coiled-coil stretches lie at residues 326-418 (LEAD…QYNQ), 444-472 (LDTF…QTAH), and 509-602 (RHLA…QRAP). Residues 666 to 783 (PGGAEDQRLN…SLPIFGRAAR (118 aa)) form a flexible hinge region. 3 coiled-coil regions span residues 835-923 (EAEI…AKLE), 977-1116 (EMLS…AKAG), and 1209-1265 (VEAI…LQSV). Positions 1049-1074 (ADSGAEERARQRRDELHAQLSNNRSR) are disordered. Residues 1051–1065 (SGAEERARQRRDELH) are compositionally biased toward basic and acidic residues.

The protein belongs to the SMC family. MukB subfamily. In terms of assembly, homodimerization via its hinge domain. Binds to DNA via its C-terminal region. Interacts, and probably forms a ternary complex, with MukE and MukF via its C-terminal region. The complex formation is stimulated by calcium or magnesium. Interacts with tubulin-related protein FtsZ.

The protein resides in the cytoplasm. It is found in the nucleoid. In terms of biological role, plays a central role in chromosome condensation, segregation and cell cycle progression. Functions as a homodimer, which is essential for chromosome partition. Involved in negative DNA supercoiling in vivo, and by this means organize and compact chromosomes. May achieve or facilitate chromosome segregation by condensation DNA from both sides of a centrally located replisome during cell division. This Salmonella dublin (strain CT_02021853) protein is Chromosome partition protein MukB.